The following is a 423-amino-acid chain: Large ribosomal subunit protein mL37 (423 aa).

Residues 1–29 constitute a mitochondrion transit peptide; the sequence is MALASGPALRALAGSGRLGLGGYGTPKRG.

Belongs to the mitochondrion-specific ribosomal protein mL37 family. In terms of assembly, component of the mitochondrial ribosome large subunit (39S) which comprises a 16S rRNA and about 50 distinct proteins.

The protein localises to the mitochondrion. The protein is Large ribosomal subunit protein mL37 (Mrpl37) of Mus musculus (Mouse).